The chain runs to 535 residues: Flavin-containing monooxygenase iboF (535 aa).

An N-terminal signal peptide occupies residues 1–24 (MFSLRPTALVSLSVVLFSIQETLS). Position 60 to 65 (60 to 65 (GAGPSG)) interacts with FAD. Residues asparagine 134, asparagine 243, and asparagine 300 are each glycosylated (N-linked (GlcNAc...) asparagine). 307–312 (GAAASG) serves as a coordination point for NADP(+). N-linked (GlcNAc...) asparagine glycans are attached at residues asparagine 356, asparagine 382, and asparagine 410.

Belongs to the FMO family. FAD serves as cofactor.

Its pathway is secondary metabolite biosynthesis. Functionally, flavin-containing monooxygenase; part of the gene cluster that mediates the biosynthesis of the psychoactive metabolites ibotenic acid and muscimol. The first committed step is glutamate hydroxylation by the 2-oxoglutarate-dependent dioxygenase iboH, and the last step is decarboxylation of ibotenic acid to muscimol by the decarboxylase iboD. The order of the intermediate reactions is somewhat ambiguous. IboA likely activates the carboxylic acid at position 5 to introduce an amide bond, and the flavin monooxygenase iboF generates the N-O bond. There are several options for the latter step. One option is that iboF directly hydroxylates the amide nitrogen formed by iboA to produce a hydroxamic acid species. Another option is that iboF hydroxylates an external N-containing compound, whose resulting N-O bond is subsequently introduced into the hydroxyglutamate scaffold. The paralogous PLP-dependent cystathionine gamma-synthase-like enzymes iboG1 and iboG2 are likely involved in substitution of the OH group at position 3 by the O-N moiety. The first cyclic intermediate is most probably tricholomic acid which is likely desaturated to ibotenic acid by the cytochrome P450 monooxygenase iboC. The polypeptide is Flavin-containing monooxygenase iboF (Amanita muscaria (strain Koide BX008)).